Consider the following 714-residue polypeptide: Elongation factor G-like protein (714 aa).

One can recognise a tr-type G domain in the interval 21-289; sequence GGVRNVVLVG…VATRGFPSPM (269 aa). The segment at 30–37 is G1; that stretch reads GPSGGGKT. Position 30-37 (30-37) interacts with GTP; sequence GPSGGGKT. Positions 73-77 are G2; it reads QRSVG. A G3 region spans residues 94 to 97; the sequence is DTPG. GTP is bound by residues 94–98 and 148–151; these read DTPGY and TKLD. Residues 148-151 form a G4 region; it reads TKLD. Residues 267–269 form a G5 region; that stretch reads CSS.

This sequence belongs to the TRAFAC class translation factor GTPase superfamily. Classic translation factor GTPase family. EF-G/EF-2 subfamily.

In Mycobacterium tuberculosis (strain ATCC 25618 / H37Rv), this protein is Elongation factor G-like protein.